We begin with the raw amino-acid sequence, 207 residues long: Succinyl-CoA:3-ketoacid coenzyme A transferase subunit B (207 aa).

Residue E43 is part of the active site.

The protein belongs to the 3-oxoacid CoA-transferase subunit B family. As to quaternary structure, heterodimer of a subunit A and a subunit B.

It catalyses the reaction a 3-oxo acid + succinyl-CoA = a 3-oxoacyl-CoA + succinate. The chain is Succinyl-CoA:3-ketoacid coenzyme A transferase subunit B (scoB) from Helicobacter pylori (strain ATCC 700392 / 26695) (Campylobacter pylori).